The primary structure comprises 562 residues: MVVPGNSHGIPRDHAIDLSDRAMDLEAEPGQSSDLKEVQKLHELVKRLEIQNQQLKIKRNPQDNHLSALNCTGVMNSINIQPEKGDLQIMPNLQSQLEQINSEKENIPALRMDAQMQYEKVCSDSKPGHKVEIHCDQDDSCFYSVDGSGRSELEEAISKMSELNSSGENILDETALDEVDVLELGSCSEDEEDCWLYVSPRKVENAEQKPDSPLKWCRQVLDHHSPETEAACRSLIGKLDQGYLSIHSALSSQSSVDSELSTSDDSISMGYKLQDLTDVQVMARLQEESLRQDYASSSASVSRRSSSASLHSLRRGTFSDQEFDTYSLEDEDDCDCSLSFRSSHRYSPSPLSSPRCQSPSAAESRATTSRIRPPRRSIQNHVQERMKYANCEDEMRHSMPNLAKTSLRSLEAVRSSRSLESDLQGPSSRLTRMQQPSTSTPPSKMRYGASNQPALTARQPIKPGVSTSSLLTSRQAIKSSGYNNSSGIRKIQSSPGLNPSGSSAVSRTGNVSSSIKHSTVKSQASMGSTVPKSKMIQPSRRSLPSAKMNSTLGDDSWKDGCY.

Disordered regions lie at residues 292-313 (QDYA…LHSL), 344-381 (HRYS…IQNH), and 409-562 (SLEA…DGCY). 2 stretches are compositionally biased toward low complexity: residues 295–311 (ASSS…ASLH) and 345–355 (RYSPSPLSSPR). 4 stretches are compositionally biased toward polar residues: residues 356–370 (CQSP…TTSR), 424–442 (QGPS…STPP), 465–531 (VSTS…STVP), and 539–553 (SRRS…STLG).

It belongs to the SLAIN motif-containing family.

In Xenopus laevis (African clawed frog), this protein is SLAIN motif-containing protein-like.